Consider the following 95-residue polypeptide: MLHTLSCSPYHADLDTLLRGLDKGDALVLLQDGVIAALAGGNIIHRLLDSAVPLYALRPDVVARGMTEQISNSAVLIGYNEFVQLTVEHPQQLAW.

Belongs to the DsrH/TusB family. Heterohexamer, formed by a dimer of trimers. The hexameric TusBCD complex contains 2 copies each of TusB, TusC and TusD. The TusBCD complex interacts with TusE.

It localises to the cytoplasm. In terms of biological role, part of a sulfur-relay system required for 2-thiolation of 5-methylaminomethyl-2-thiouridine (mnm(5)s(2)U) at tRNA wobble positions. The protein is Protein TusB of Pectobacterium carotovorum subsp. carotovorum (strain PC1).